A 103-amino-acid polypeptide reads, in one-letter code: Growth-regulated alpha protein (103 aa).

A signal peptide spans 1–30; it reads MARAANPAPRLLGAAMLLLLLVAAGRRAAG. 2 cysteine pairs are disulfide-bonded: Cys-39–Cys-65 and Cys-41–Cys-81.

This sequence belongs to the intercrine alpha (chemokine CxC) family.

Its subcellular location is the secreted. Has chemotactic activity for neutrophils. This chain is Growth-regulated alpha protein (CXCL1), found in Ovis aries (Sheep).